The chain runs to 1494 residues: Ral GTPase-activating protein subunit beta (1494 aa).

Disordered regions lie at residues P355–R437 and E709–E738. S359 bears the Phosphoserine mark. Residues T363 and T379 each carry the phosphothreonine modification. 3 stretches are compositionally biased toward polar residues: residues S369–P381, N392–E428, and N711–P735. 2 positions are modified to phosphoserine: S421 and S720. Position 734 is a phosphothreonine (T734). The region spanning I1149–I1392 is the Rap-GAP domain. S1285 carries the post-translational modification Phosphoserine. Residues N1312–S1323 are compositionally biased toward polar residues. The segment at N1312–P1335 is disordered.

Component of the heterodimeric RalGAP1 complex with RALGAPA1 and of the heterodimeric RalGAP2 complex with RALGAPA2. Heterodimerization is required for activity. As to expression, highly expressed in brain, mostly in amygdala.

Functionally, non-catalytic subunit of the heterodimeric RalGAP1 and RalGAP2 complexes which act as GTPase activators for the Ras-like small GTPases RALA and RALB. This is Ral GTPase-activating protein subunit beta (RALGAPB) from Homo sapiens (Human).